An 859-amino-acid polypeptide reads, in one-letter code: Envelope glycoprotein (859 aa).

A propeptide spanning residues 1–6 is cleaved from the precursor; sequence MVSIAF. Residues 7 to 614 lie on the Extracellular side of the membrane; sequence YGGIPGGIST…KDLWSHIGNW (608 aa). Asparagine 40, asparagine 112, asparagine 141, asparagine 148, asparagine 186, asparagine 214, asparagine 233, asparagine 244, asparagine 313, asparagine 340, asparagine 368, asparagine 399, asparagine 406, and asparagine 411 each carry an N-linked (GlcNAc...) asparagine; by host glycan. The tract at residues 446-466 is fusion peptide; that stretch reads FGISAIVAAIVAATAIAASAT. N-linked (GlcNAc...) asparagine; by host glycans are attached at residues asparagine 483 and asparagine 490. The immunosuppression stretch occupies residues 498–513; it reads LIERQIKILYAMILQT. Residues asparagine 550 and asparagine 557 are each glycosylated (N-linked (GlcNAc...) asparagine; by host). Coiled coils occupy residues 576–624 and 663–699; these read ILTT…SIIK and KKFH…YYKQ. A helical membrane pass occupies residues 615–635; the sequence is IPGLGASIIKYIVMFLLIYLL. Topologically, residues 636-859 are cytoplasmic; it reads LTSSPKILRA…TSHVSMPQYV (224 aa).

As to quaternary structure, the mature envelope protein (Env) consists of a trimer of SU-TM heterodimers attached by noncovalent interactions or by a labile interchain disulfide bond. Specific enzymatic cleavages in vivo yield mature proteins. Envelope glycoproteins are synthesized as an inactive precursor that is N-glycosylated and processed likely by host cell furin or by a furin-like protease in the Golgi to yield the mature SU and TM proteins. The cleavage site between SU and TM requires the minimal sequence [KR]-X-[KR]-R.

The protein localises to the virion membrane. It localises to the host cell membrane. Its function is as follows. The surface protein (SU) attaches the virus to the host cell by binding to its receptor. This interaction triggers the refolding of the transmembrane protein (TM) and is thought to activate its fusogenic potential by unmasking its fusion peptide. Fusion occurs at the host cell plasma membrane. Functionally, the transmembrane protein (TM) acts as a class I viral fusion protein. Under the current model, the protein has at least 3 conformational states: pre-fusion native state, pre-hairpin intermediate state, and post-fusion hairpin state. During viral and target cell membrane fusion, the coiled coil regions (heptad repeats) assume a trimer-of-hairpins structure, positioning the fusion peptide in close proximity to the C-terminal region of the ectodomain. The formation of this structure appears to drive apposition and subsequent fusion of viral and target cell membranes. Membranes fusion leads to delivery of the nucleocapsid into the cytoplasm. In Equus asinus (Donkey), this protein is Envelope glycoprotein (env).